Consider the following 302-residue polypeptide: Sulfate adenylyltransferase subunit 2 (302 aa).

Belongs to the PAPS reductase family. CysD subfamily. Heterodimer composed of CysD, the smaller subunit, and CysN.

The enzyme catalyses sulfate + ATP + H(+) = adenosine 5'-phosphosulfate + diphosphate. The protein operates within sulfur metabolism; hydrogen sulfide biosynthesis; sulfite from sulfate: step 1/3. With CysN forms the ATP sulfurylase (ATPS) that catalyzes the adenylation of sulfate producing adenosine 5'-phosphosulfate (APS) and diphosphate, the first enzymatic step in sulfur assimilation pathway. APS synthesis involves the formation of a high-energy phosphoric-sulfuric acid anhydride bond driven by GTP hydrolysis by CysN coupled to ATP hydrolysis by CysD. This chain is Sulfate adenylyltransferase subunit 2, found in Shewanella pealeana (strain ATCC 700345 / ANG-SQ1).